A 76-amino-acid chain; its full sequence is Exodeoxyribonuclease 7 small subunit (76 aa).

This sequence belongs to the XseB family. Heterooligomer composed of large and small subunits.

The protein resides in the cytoplasm. The catalysed reaction is Exonucleolytic cleavage in either 5'- to 3'- or 3'- to 5'-direction to yield nucleoside 5'-phosphates.. Its function is as follows. Bidirectionally degrades single-stranded DNA into large acid-insoluble oligonucleotides, which are then degraded further into small acid-soluble oligonucleotides. This is Exodeoxyribonuclease 7 small subunit from Enterococcus faecalis (strain ATCC 700802 / V583).